The chain runs to 220 residues: Deoxyribose-phosphate aldolase (220 aa).

D89 serves as the catalytic Proton donor/acceptor. Residue K150 is the Schiff-base intermediate with acetaldehyde of the active site. K182 (proton donor/acceptor) is an active-site residue.

It belongs to the DeoC/FbaB aldolase family. DeoC type 1 subfamily.

Its subcellular location is the cytoplasm. It catalyses the reaction 2-deoxy-D-ribose 5-phosphate = D-glyceraldehyde 3-phosphate + acetaldehyde. It functions in the pathway carbohydrate degradation; 2-deoxy-D-ribose 1-phosphate degradation; D-glyceraldehyde 3-phosphate and acetaldehyde from 2-deoxy-alpha-D-ribose 1-phosphate: step 2/2. In terms of biological role, catalyzes a reversible aldol reaction between acetaldehyde and D-glyceraldehyde 3-phosphate to generate 2-deoxy-D-ribose 5-phosphate. The chain is Deoxyribose-phosphate aldolase from Mycoplasmoides pirum (Mycoplasma pirum).